The sequence spans 181 residues: CASP-like protein 1F2 (181 aa).

At 1–18 (MADIETKSSQNQPLKTQN) the chain is on the cytoplasmic side. The helical transmembrane segment at 19–39 (IFIGAQIFLRIVVIAASFAST) threads the bilayer. Over 40–70 (WLMLTNKQTIDIGGFVLDANYSYSPEFKFLS) the chain is Extracellular. An N-linked (GlcNAc...) asparagine glycan is attached at Asn-59. Residues 71–91 (YANIVVGAFSFVSLLFLVLVG) form a helical membrane-spanning segment. At 92–100 (RRSSNPTYY) the chain is on the cytoplasmic side. The helical transmembrane segment at 101-121 (FILFLHDLALMSLVLGGCAAA) threads the bilayer. At 122–150 (TVIGSLGKYGNSHTGWMQICDHFGKFCKR) the chain is on the extracellular side. A helical transmembrane segment spans residues 151 to 171 (ATTSVAFSYFSLVCLLILTIT). Residues 172 to 181 (SASKSRQIQV) are Cytoplasmic-facing.

Belongs to the Casparian strip membrane proteins (CASP) family. As to quaternary structure, homodimer and heterodimers.

It localises to the cell membrane. The protein is CASP-like protein 1F2 of Populus trichocarpa (Western balsam poplar).